A 313-amino-acid polypeptide reads, in one-letter code: Malate dehydrogenase (313 aa).

NAD(+) is bound by residues 8–13 (GAGNVG) and Asp33. Substrate is bound by residues Arg83 and Arg89. NAD(+) contacts are provided by residues Asn96 and 119-121 (ISN). Residues Asn121 and Arg152 each contribute to the substrate site. The active-site Proton acceptor is the His176.

It belongs to the LDH/MDH superfamily. MDH type 3 family.

The enzyme catalyses (S)-malate + NAD(+) = oxaloacetate + NADH + H(+). Its function is as follows. Catalyzes the reversible oxidation of malate to oxaloacetate. This chain is Malate dehydrogenase, found in Parabacteroides distasonis (strain ATCC 8503 / DSM 20701 / CIP 104284 / JCM 5825 / NCTC 11152).